We begin with the raw amino-acid sequence, 422 residues long: Glutamyl-tRNA reductase (422 aa).

Substrate-binding positions include 49–52 (TCNR), S108, 113–115 (EPQ), and Q119. Catalysis depends on C50, which acts as the Nucleophile. 188–193 (GAGQTI) lines the NADP(+) pocket.

This sequence belongs to the glutamyl-tRNA reductase family. Homodimer.

The enzyme catalyses (S)-4-amino-5-oxopentanoate + tRNA(Glu) + NADP(+) = L-glutamyl-tRNA(Glu) + NADPH + H(+). Its pathway is porphyrin-containing compound metabolism; protoporphyrin-IX biosynthesis; 5-aminolevulinate from L-glutamyl-tRNA(Glu): step 1/2. Catalyzes the NADPH-dependent reduction of glutamyl-tRNA(Glu) to glutamate 1-semialdehyde (GSA). The polypeptide is Glutamyl-tRNA reductase (Marinomonas sp. (strain MWYL1)).